The chain runs to 373 residues: Arabinonate dehydratase (373 aa).

Asp-199, Glu-225, and Glu-251 together coordinate Mg(2+).

The protein belongs to the mandelate racemase/muconate lactonizing enzyme family. Homooctamer. The cofactor is Mg(2+).

The catalysed reaction is D-arabinonate = 2-dehydro-3-deoxy-D-arabinonate + H2O. Inhibited by substrate levels above 8 mM. Its function is as follows. Catalyzes the dehydration of D-arabinonate to 2-keto-3-deoxy-D-arabinonate. Participates in a pentose oxidation pathway that converts D-arabinonate to 2-oxoglutarate. The chain is Arabinonate dehydratase from Saccharolobus solfataricus (strain ATCC 35092 / DSM 1617 / JCM 11322 / P2) (Sulfolobus solfataricus).